Here is a 70-residue protein sequence, read N- to C-terminus: Bowman-Birk type proteinase inhibitor A-II (70 aa).

Cystine bridges form between Cys-11–Cys-68, Cys-12–Cys-29, Cys-15–Cys-63, Cys-17–Cys-27, Cys-36–Cys-43, Cys-40–Cys-55, and Cys-45–Cys-53.

It belongs to the Bowman-Birk serine protease inhibitor family.

In terms of biological role, these proteins inhibit trypsin and chymotrypsin, having 2 sites of interaction with trypsin. The site of interaction with chymotrypsin has not been determined but is not independent of the trypsin-reactive sites. This Arachis hypogaea (Peanut) protein is Bowman-Birk type proteinase inhibitor A-II.